The following is a 679-amino-acid chain: Patatin-like phospholipase 1 (679 aa).

Disordered regions lie at residues 19 to 45 and 155 to 194; these read FSDD…NAEN and GEYE…NYNS. Polar residues-rich tracts occupy residues 35–45 and 162–176; these read YSGSETQNAEN and TSSY…NTVG. Basic and acidic residues predominate over residues 177–188; sequence SEKEETENKNEE. The PNPLA domain maps to 338–544; that stretch reads LSLDGGGILT…KASNPALIAL (207 aa). Positions 381–385 match the GXSXG motif; it reads GTSAG. Catalysis depends on Ser-383, which acts as the Nucleophile. Catalysis depends on Asp-531, which acts as the Proton acceptor. The DGA/G signature appears at 531-533; sequence DGA.

It belongs to the patatin family.

The protein localises to the cytoplasm. It catalyses the reaction a 1,2-diacyl-sn-glycero-3-phosphocholine + H2O = a 1-acyl-sn-glycero-3-phosphocholine + a fatty acid + H(+). The catalysed reaction is 1,2-dihexadecanoyl-sn-glycero-3-phosphocholine + H2O = 1-hexadecanoyl-sn-glycero-3-phosphocholine + hexadecanoate + H(+). Hydrolyzes the ester bond of the fatty acyl group attached at the sn-2 position of phospholipids such as phosphatidylcholine. Involved in gametogenesis; however, it is not clear whether it is involved in gametocytes development in host erythrocytes or in gametocyte activation in the mosquito midgut. Involved in gametocyte development in host erythrocytes; however, not involved in gametocytes activation including male gamete exflagellation. Involved in the rounding up of gametocytes following activation in the mosquito midgut; however, not required for gametocyte development in host erythrocytes. Required for exflagellation of activated male gametocytes. Involved in gametocytes egress from host erythrocytes by promoting the relocalization of perforin-like protein PLP2-containing vesicles to the periphery of gametocytes; PLP2 secretion is required for permeabilization of the erythrocyte membrane and thus, promotes gametocyte egress. Dispensable for asexual blood stage development. The protein is Patatin-like phospholipase 1 of Plasmodium falciparum (isolate NF54).